Consider the following 81-residue polypeptide: Cytochrome c oxidase subunit NDUFA4 (81 aa).

Residues 1 to 14 (MLRHILGLAKKHPS) are Mitochondrial matrix-facing. Lys10 is modified (N6-acetyllysine). The chain crosses the membrane as a helical span at residues 15-37 (LIPLFVFLGTGATGATLYLLRLA). At 38–81 (LFSPDVCWDRNNPEPWNKLGPNDQYKFYSVNVDYDKLKKERPDF) the chain is on the mitochondrial intermembrane side. Ser66 bears the Phosphoserine mark.

It belongs to the complex IV NDUFA4 subunit family. Component of the cytochrome c oxidase (complex IV, CIV), a multisubunit enzyme composed of 14 subunits. The complex is composed of a catalytic core of 3 subunits MT-CO1, MT-CO2 and MT-CO3, encoded in the mitochondrial DNA, and 11 supernumerary subunits COX4I, COX5A, COX5B, COX6A, COX6B, COX6C, COX7A, COX7B, COX7C, COX8 and NDUFA4, which are encoded in the nuclear genome. The complex exists as a monomer or a dimer and forms supercomplexes (SCs) in the inner mitochondrial membrane with NADH-ubiquinone oxidoreductase (complex I, CI) and ubiquinol-cytochrome c oxidoreductase (cytochrome b-c1 complex, complex III, CIII), resulting in different assemblies (supercomplex SCI(1)III(2)IV(1) and megacomplex MCI(2)III(2)IV(2)). Interacts with RAB5IF. Interacts with FLVCR2; this interaction occurs in the absence of heme and is disrupted upon heme binding.

It localises to the mitochondrion inner membrane. Functionally, component of the cytochrome c oxidase, the last enzyme in the mitochondrial electron transport chain which drives oxidative phosphorylation. The respiratory chain contains 3 multisubunit complexes succinate dehydrogenase (complex II, CII), ubiquinol-cytochrome c oxidoreductase (cytochrome b-c1 complex, complex III, CIII) and cytochrome c oxidase (complex IV, CIV), that cooperate to transfer electrons derived from NADH and succinate to molecular oxygen, creating an electrochemical gradient over the inner membrane that drives transmembrane transport and the ATP synthase. Cytochrome c oxidase is the component of the respiratory chain that catalyzes the reduction of oxygen to water. Electrons originating from reduced cytochrome c in the intermembrane space (IMS) are transferred via the dinuclear copper A center (CU(A)) of subunit 2 and heme A of subunit 1 to the active site in subunit 1, a binuclear center (BNC) formed by heme A3 and copper B (CU(B)). The BNC reduces molecular oxygen to 2 water molecules unsing 4 electrons from cytochrome c in the IMS and 4 protons from the mitochondrial matrix. NDUFA4 is required for complex IV maintenance. The protein is Cytochrome c oxidase subunit NDUFA4 (NDUFA4) of Macaca fascicularis (Crab-eating macaque).